The primary structure comprises 113 residues: Putative membrane protein insertion efficiency factor (113 aa).

The protein belongs to the UPF0161 family.

Its subcellular location is the cell inner membrane. Functionally, could be involved in insertion of integral membrane proteins into the membrane. The chain is Putative membrane protein insertion efficiency factor from Campylobacter jejuni subsp. jejuni serotype O:23/36 (strain 81-176).